A 41-amino-acid chain; its full sequence is Ornatin-A3 (41 aa).

The short motif at 33–35 (RGD) is the Cell attachment site element.

The protein belongs to the ornatin family.

The protein resides in the secreted. In terms of biological role, potent inhibitor of fibrinogen interaction with platelet receptors expressed on glycoprotein IIb-IIIa complex. May prevent blood from clotting during either feeding and/or storage of ingested blood. The polypeptide is Ornatin-A3 (Placobdella ornata (Turtle leech)).